The following is a 142-amino-acid chain: Hemoglobin subunit alpha-1 (142 aa).

The Globin domain maps to 2-142 (VLSAADKSNV…VSTVLTSKYR (141 aa)). O2 is bound at residue histidine 59. A heme b-binding site is contributed by histidine 88.

This sequence belongs to the globin family. Heterotetramer of two alpha chains and two beta chains.

In terms of biological role, involved in oxygen transport from the lung to the various peripheral tissues. Hemopressin acts as an antagonist peptide of the cannabinoid receptor CNR1. Hemopressin-binding efficiently blocks cannabinoid receptor CNR1 and subsequent signaling. The chain is Hemoglobin subunit alpha-1 (HBA1) from Capra hircus (Goat).